The primary structure comprises 446 residues: Histidine--tRNA ligase (446 aa).

Belongs to the class-II aminoacyl-tRNA synthetase family. As to quaternary structure, homodimer.

The protein resides in the cytoplasm. It carries out the reaction tRNA(His) + L-histidine + ATP = L-histidyl-tRNA(His) + AMP + diphosphate + H(+). This chain is Histidine--tRNA ligase, found in Burkholderia vietnamiensis (strain G4 / LMG 22486) (Burkholderia cepacia (strain R1808)).